Reading from the N-terminus, the 772-residue chain is PDZ domain-containing protein 4 (772 aa).

The PDZ domain occupies 136–221; the sequence is EVELCKNSHQ…NISLLVARPE (86 aa). The disordered stretch occupies residues 239–320; sequence DFGSENEGDL…TNTPGSLRKF (82 aa). A Phosphoserine modification is found at Ser242. Residues 287-303 show a composition bias toward basic and acidic residues; sequence RTDESTRNEESSEHDLL. A coiled-coil region spans residues 394–424; that stretch reads VNRNESLGHEMAMLEEELRHLEFKCRNILRA. Residues 450–573 form a disordered region; that stretch reads ASEPKKHELS…VGPEGSPYLS (124 aa). Residues 452–472 are compositionally biased toward basic and acidic residues; that stretch reads EPKKHELSDISELPEKSDKDS. Ser459 carries the post-translational modification Phosphoserine. Composition is skewed to polar residues over residues 473 to 484 and 502 to 511; these read TSAYNTGESCRS and AGNSNLNRTP. Residues 535–552 show a composition bias toward basic and acidic residues; the sequence is LSRDPEVGRRQHTEERVR.

The protein resides in the cytoplasm. Its subcellular location is the cell cortex. The chain is PDZ domain-containing protein 4 (Pdzd4) from Mus musculus (Mouse).